A 306-amino-acid polypeptide reads, in one-letter code: Mitochondrial uncoupling protein 1 (306 aa).

3 Solcar repeats span residues Leu9–Leu102, Val112–Thr203, and Asp212–Tyr296. A run of 6 helical transmembrane segments spans residues Phe15–Ala35, Leu71–Leu91, Ile118–Val138, Thr177–Tyr197, Ile218–Val238, and Tyr269–Thr289.

The protein belongs to the mitochondrial carrier (TC 2.A.29) family. Widely expressed.

Its subcellular location is the mitochondrion inner membrane. Functionally, PUMPS are mitochondrial transporter proteins that create proton leaks across the inner mitochondrial membrane, thus uncoupling oxidative phosphorylation. This leads to a decrease in the efficiency of oxidative phosphorylation and an increase in heat production. Is involved in protecting plant cells against oxidative stress damage and maintaining the redox balance of the mitochondrial electron transport chain to facilitate photosynthetic metabolism. May play a regulatory role during photorespiration. The sequence is that of Mitochondrial uncoupling protein 1 (PUMP1) from Arabidopsis thaliana (Mouse-ear cress).